The sequence spans 299 residues: Tyrosine recombinase XerC (299 aa).

The region spanning 2–88 (SALQPLIDTY…ALRSFLDYLV (87 aa)) is the Core-binding (CB) domain. The 181-residue stretch at 109–289 (PLPKNVSVDD…DFQHLSKIYD (181 aa)) folds into the Tyr recombinase domain. Catalysis depends on residues Arg-148, Lys-172, His-241, Arg-244, and His-267. Tyr-276 serves as the catalytic O-(3'-phospho-DNA)-tyrosine intermediate.

It belongs to the 'phage' integrase family. XerC subfamily. As to quaternary structure, forms a cyclic heterotetrameric complex composed of two molecules of XerC and two molecules of XerD.

Its subcellular location is the cytoplasm. Its function is as follows. Site-specific tyrosine recombinase, which acts by catalyzing the cutting and rejoining of the recombining DNA molecules. The XerC-XerD complex is essential to convert dimers of the bacterial chromosome into monomers to permit their segregation at cell division. It also contributes to the segregational stability of plasmids. The chain is Tyrosine recombinase XerC from Psychromonas ingrahamii (strain DSM 17664 / CCUG 51855 / 37).